Here is a 143-residue protein sequence, read N- to C-terminus: MNPVRRRKLFILLFALTILSAAAALVLYALRQNISLFYTPTQIVAGEAPVKHHIRVGGMVEANSIVRAKKGLDVQFKITDFENTIVVTYSGILPDLFREGQGIVAEGEVTDNHHFHAIQVLAKHDANYMPPQVKSALADKVKQ.

The Cytoplasmic portion of the chain corresponds to Met-1–Lys-8. The helical; Signal-anchor for type II membrane protein transmembrane segment at Leu-9–Ala-29 threads the bilayer. At Leu-30–Gln-143 the chain is on the periplasmic side. Heme is bound by residues His-124 and Tyr-128.

Belongs to the CcmE/CycJ family.

The protein localises to the cell inner membrane. Heme chaperone required for the biogenesis of c-type cytochromes. Transiently binds heme delivered by CcmC and transfers the heme to apo-cytochromes in a process facilitated by CcmF and CcmH. In Legionella pneumophila (strain Corby), this protein is Cytochrome c-type biogenesis protein CcmE.